The chain runs to 123 residues: Phospholipase A2 (123 aa).

Intrachain disulfides connect Cys11–Cys77, Cys27–Cys123, Cys29–Cys45, Cys44–Cys105, Cys51–Cys98, Cys61–Cys91, and Cys84–Cys96. Ca(2+) contacts are provided by Tyr28, Gly30, and Gly32. His48 is an active-site residue. Asp49 is a Ca(2+) binding site. Residue Asp99 is part of the active site.

It belongs to the phospholipase A2 family. As to quaternary structure, monomer or homodimer. Ca(2+) is required as a cofactor. In terms of processing, activated by trypsin cleavage in the duodenum. Can also be activated by thrombin or autocatalytically.

It localises to the secreted. It catalyses the reaction a 1,2-diacyl-sn-glycero-3-phosphocholine + H2O = a 1-acyl-sn-glycero-3-phosphocholine + a fatty acid + H(+). The enzyme catalyses 1,2-ditetradecanoyl-sn-glycero-3-phosphocholine + H2O = 1-tetradecanoyl-sn-glycero-3-phosphocholine + tetradecanoate + H(+). The catalysed reaction is 1,2-dihexadecanoyl-sn-glycero-3-phosphocholine + H2O = 1-hexadecanoyl-sn-glycero-3-phosphocholine + hexadecanoate + H(+). It carries out the reaction 1-hexadecanoyl-2-(9Z-octadecenoyl)-sn-glycero-3-phosphocholine + H2O = 1-hexadecanoyl-sn-glycero-3-phosphocholine + (9Z)-octadecenoate + H(+). It catalyses the reaction 1-hexadecanoyl-2-(5Z,8Z,11Z,14Z-eicosatetraenoyl)-sn-glycero-3-phosphocholine + H2O = 1-hexadecanoyl-sn-glycero-3-phosphocholine + (5Z,8Z,11Z,14Z)-eicosatetraenoate + H(+). The enzyme catalyses 1-hexadecanoyl-2-(9Z-octadecenoyl)-sn-glycero-3-phospho-(1'-sn-glycerol) + H2O = 1-hexadecanoyl-sn-glycero-3-phospho-(1'-sn-glycerol) + (9Z)-octadecenoate + H(+). The catalysed reaction is N-hexadecanoyl-1,2-di-(9Z-octadecenoyl)-sn-glycero-3-phosphoethanolamine + H2O = N-hexadecanoyl-1-(9Z-octadecenoyl)-sn-glycero-3-phosphoethanolamine + (9Z)-octadecenoate + H(+). It carries out the reaction 1-hexadecanoyl-2-(9Z,12Z-octadecadienoyl)-sn-glycero-3-phosphoethanolamine + H2O = 1-hexadecanoyl-sn-glycero-3-phosphoethanolamine + (9Z,12Z)-octadecadienoate + H(+). It catalyses the reaction N,1-dihexadecanoyl-2-(9Z,12Z-octadecadienoyl)-sn-glycero-3-phosphoethanolamine + H2O = N,1-dihexadecanoyl-sn-glycero-3-phosphoethanolamine + (9Z,12Z)-octadecadienoate + H(+). Secretory calcium-dependent phospholipase A2 that primarily targets dietary phospholipids in the intestinal tract. Hydrolyzes the ester bond of the fatty acyl group attached at sn-2 position of phospholipids (phospholipase A2 activity) with preference for phosphatidylethanolamines and phosphatidylglycerols over phosphatidylcholines. May play a role in the biosynthesis of N-acyl ethanolamines that regulate energy metabolism and inflammation in the intestinal tract. Hydrolyzes N-acyl phosphatidylethanolamines to N-acyl lysophosphatidylethanolamines, which are further cleaved by a lysophospholipase D to release N-acyl ethanolamines. May act in an autocrine and paracrine manner. Has anti-helminth activity in a process regulated by gut microbiota. Upon helminth infection of intestinal epithelia, directly affects phosphatidylethanolamine contents in the membrane of helminth larvae, likely controlling an array of phospholipid-mediated cellular processes such as membrane fusion and cell division while providing for better immune recognition, ultimately reducing larvae integrity and infectivity. The sequence is that of Phospholipase A2 (PLA2G1B) from Ovis aries (Sheep).